Reading from the N-terminus, the 183-residue chain is ATP synthase subunit b, chloroplastic (183 aa).

A helical membrane pass occupies residues 28 to 48; that stretch reads DIFEANVINILLLLFGLIYVL.

It belongs to the ATPase B chain family. F-type ATPases have 2 components, F(1) - the catalytic core - and F(0) - the membrane proton channel. F(1) has five subunits: alpha(3), beta(3), gamma(1), delta(1), epsilon(1). F(0) has four main subunits: a(1), b(1), b'(1) and c(10-14). The alpha and beta chains form an alternating ring which encloses part of the gamma chain. F(1) is attached to F(0) by a central stalk formed by the gamma and epsilon chains, while a peripheral stalk is formed by the delta, b and b' chains.

The protein resides in the plastid. The protein localises to the chloroplast thylakoid membrane. Its function is as follows. F(1)F(0) ATP synthase produces ATP from ADP in the presence of a proton or sodium gradient. F-type ATPases consist of two structural domains, F(1) containing the extramembraneous catalytic core and F(0) containing the membrane proton channel, linked together by a central stalk and a peripheral stalk. During catalysis, ATP synthesis in the catalytic domain of F(1) is coupled via a rotary mechanism of the central stalk subunits to proton translocation. In terms of biological role, component of the F(0) channel, it forms part of the peripheral stalk, linking F(1) to F(0). This chain is ATP synthase subunit b, chloroplastic, found in Porphyra purpurea (Red seaweed).